The sequence spans 361 residues: Peptide chain release factor 1 (361 aa).

N5-methylglutamine is present on Gln-233. Residues 282–310 (SKKQAERAQNRKSQVGSGDRSERIRTYNF) are disordered.

Belongs to the prokaryotic/mitochondrial release factor family. In terms of processing, methylated by PrmC. Methylation increases the termination efficiency of RF1.

Its subcellular location is the cytoplasm. Peptide chain release factor 1 directs the termination of translation in response to the peptide chain termination codons UAG and UAA. This is Peptide chain release factor 1 from Treponema denticola (strain ATCC 35405 / DSM 14222 / CIP 103919 / JCM 8153 / KCTC 15104).